Here is a 30-residue protein sequence, read N- to C-terminus: Photosystem II reaction center protein Psb30 (30 aa).

Residues 1 to 6 are Lumenal-facing; that stretch reads EVIAQL. A helical membrane pass occupies residues 7 to 21; it reads TMIAMIGIAGPMIIF. Residues 22–30 lie on the Cytoplasmic side of the membrane; sequence LLAVRRGNL.

It belongs to the Psb30/Ycf12 family. As to quaternary structure, PSII is composed of 1 copy each of membrane proteins PsbA, PsbB, PsbC, PsbD, PsbE, PsbF, PsbH, PsbI, PsbJ, PsbK, PsbL, PsbM, PsbT, PsbX, PsbY, PsbZ, Psb30/Ycf12, peripheral proteins PsbO, CyanoQ (PsbQ), PsbU, PsbV and a large number of cofactors. It forms dimeric complexes. Requires PSII binds multiple chlorophylls, carotenoids and specific lipids. as cofactor.

The protein resides in the cellular thylakoid membrane. Its function is as follows. A core subunit of photosystem II (PSII), probably helps stabilize the reaction center. PSII is a light-driven water plastoquinone oxidoreductase, using light energy to abstract electrons from H(2)O, generating a proton gradient subsequently used for ATP formation. The protein is Photosystem II reaction center protein Psb30 of Thermostichus vulcanus (Synechococcus vulcanus).